A 119-amino-acid polypeptide reads, in one-letter code: NADH-quinone oxidoreductase subunit A (119 aa).

The next 3 helical transmembrane spans lie at 7–27, 63–83, and 88–108; these read YPVLLFLLVGTGLGIALVSIG, LVAILFIIFDLETAFLFPWGV, and IGWPGFSAMMIFLLEFLLGFA.

It belongs to the complex I subunit 3 family. In terms of assembly, NDH-1 is composed of 14 different subunits. Subunits NuoA, H, J, K, L, M, N constitute the membrane sector of the complex.

Its subcellular location is the cell inner membrane. The catalysed reaction is a quinone + NADH + 5 H(+)(in) = a quinol + NAD(+) + 4 H(+)(out). In terms of biological role, NDH-1 shuttles electrons from NADH, via FMN and iron-sulfur (Fe-S) centers, to quinones in the respiratory chain. The immediate electron acceptor for the enzyme in this species is believed to be ubiquinone. Couples the redox reaction to proton translocation (for every two electrons transferred, four hydrogen ions are translocated across the cytoplasmic membrane), and thus conserves the redox energy in a proton gradient. The chain is NADH-quinone oxidoreductase subunit A from Burkholderia vietnamiensis (strain G4 / LMG 22486) (Burkholderia cepacia (strain R1808)).